A 375-amino-acid polypeptide reads, in one-letter code: Carbamoyl phosphate synthase small chain (375 aa).

Positions 1 to 180 (MSKALLVLED…DAYVVEPKGK (180 aa)) are CPSase. Serine 46, glycine 232, and glycine 234 together coordinate L-glutamine. Residues 184–375 (TVAALDLGIK…SFVELMAAQR (192 aa)) form the Glutamine amidotransferase type-1 domain. Cysteine 260 serves as the catalytic Nucleophile. Phenylalanine 261, glutamine 264, asparagine 302, glycine 304, and phenylalanine 305 together coordinate L-glutamine. Active-site residues include histidine 350 and glutamate 352.

Belongs to the CarA family. As to quaternary structure, composed of two chains; the small (or glutamine) chain promotes the hydrolysis of glutamine to ammonia, which is used by the large (or ammonia) chain to synthesize carbamoyl phosphate. Tetramer of heterodimers (alpha,beta)4.

The catalysed reaction is hydrogencarbonate + L-glutamine + 2 ATP + H2O = carbamoyl phosphate + L-glutamate + 2 ADP + phosphate + 2 H(+). It carries out the reaction L-glutamine + H2O = L-glutamate + NH4(+). Its pathway is amino-acid biosynthesis; L-arginine biosynthesis; carbamoyl phosphate from bicarbonate: step 1/1. The protein operates within pyrimidine metabolism; UMP biosynthesis via de novo pathway; (S)-dihydroorotate from bicarbonate: step 1/3. In terms of biological role, small subunit of the glutamine-dependent carbamoyl phosphate synthetase (CPSase). CPSase catalyzes the formation of carbamoyl phosphate from the ammonia moiety of glutamine, carbonate, and phosphate donated by ATP, constituting the first step of 2 biosynthetic pathways, one leading to arginine and/or urea and the other to pyrimidine nucleotides. The small subunit (glutamine amidotransferase) binds and cleaves glutamine to supply the large subunit with the substrate ammonia. This is Carbamoyl phosphate synthase small chain from Mycobacterium leprae (strain TN).